The primary structure comprises 98 residues: Protein translation factor SUI1 homolog (98 aa).

Belongs to the SUI1 family.

In Thermococcus gammatolerans (strain DSM 15229 / JCM 11827 / EJ3), this protein is Protein translation factor SUI1 homolog.